Reading from the N-terminus, the 430-residue chain is Adenylosuccinate synthetase (430 aa).

GTP contacts are provided by residues 12–18 (GDEGKGK) and 40–42 (GHT). The active-site Proton acceptor is aspartate 13. Residues aspartate 13 and glycine 40 each contribute to the Mg(2+) site. IMP is bound by residues 13–16 (DEGK), 38–41 (NAGH), threonine 128, arginine 142, glutamine 223, threonine 238, and arginine 302. Histidine 41 acts as the Proton donor in catalysis. 298–304 (TTTGRPR) lines the substrate pocket. GTP contacts are provided by residues arginine 304, 330-332 (SID), and 413-415 (SVG).

This sequence belongs to the adenylosuccinate synthetase family. As to quaternary structure, homodimer. Mg(2+) serves as cofactor.

The protein localises to the cytoplasm. It carries out the reaction IMP + L-aspartate + GTP = N(6)-(1,2-dicarboxyethyl)-AMP + GDP + phosphate + 2 H(+). It functions in the pathway purine metabolism; AMP biosynthesis via de novo pathway; AMP from IMP: step 1/2. Its function is as follows. Plays an important role in the de novo pathway of purine nucleotide biosynthesis. Catalyzes the first committed step in the biosynthesis of AMP from IMP. The sequence is that of Adenylosuccinate synthetase from Lactococcus lactis subsp. cremoris (strain SK11).